The following is an 80-amino-acid chain: Small ribosomal subunit protein bS16 (80 aa).

The protein belongs to the bacterial ribosomal protein bS16 family.

The protein is Small ribosomal subunit protein bS16 of Hydrogenovibrio crunogenus (strain DSM 25203 / XCL-2) (Thiomicrospira crunogena).